The following is a 360-amino-acid chain: Glutamate 5-kinase (360 aa).

ATP is bound at residue K7. S47, D134, and N146 together coordinate substrate. Residues 166–167 (TD) and 208–214 (TGGIKTK) each bind ATP. Positions 273–344 (VGEIHLDDGA…IGINSRSETT (72 aa)) constitute a PUA domain.

It belongs to the glutamate 5-kinase family.

It is found in the cytoplasm. It catalyses the reaction L-glutamate + ATP = L-glutamyl 5-phosphate + ADP. The protein operates within amino-acid biosynthesis; L-proline biosynthesis; L-glutamate 5-semialdehyde from L-glutamate: step 1/2. Catalyzes the transfer of a phosphate group to glutamate to form L-glutamate 5-phosphate. This is Glutamate 5-kinase from Prochlorococcus marinus (strain NATL2A).